Consider the following 311-residue polypeptide: Pyrimidine-specific ribonucleoside hydrolase RihA (311 aa).

His240 is a catalytic residue.

The protein belongs to the IUNH family. RihA subfamily.

In terms of biological role, hydrolyzes with equal efficiency cytidine or uridine to ribose and cytosine or uracil, respectively. This Escherichia coli O81 (strain ED1a) protein is Pyrimidine-specific ribonucleoside hydrolase RihA.